A 553-amino-acid polypeptide reads, in one-letter code: uncharacterized protein (553 aa).

A signal peptide spans 1–28 (MRYARHASRYSLFTLAVSAALLPGAGWA).

This is an uncharacterized protein from Pseudomonas aeruginosa (strain ATCC 15692 / DSM 22644 / CIP 104116 / JCM 14847 / LMG 12228 / 1C / PRS 101 / PAO1).